The following is a 93-amino-acid chain: uncharacterized protein (93 aa).

This is an uncharacterized protein from Schizosaccharomyces pombe (strain 972 / ATCC 24843) (Fission yeast).